The sequence spans 381 residues: MSRHEGVSCDACLKGNFRGRRYKCLICYDYDLCASCYESGATTTRHTTDHPMQCILTRVDFDLYYGGEAFSVEQPQSFTCPYCGKMGYTETSLQEHVTSEHAETSTEVICPICAALPGGDPNHVTDDFAAHLTLEHRAPRDLDESSGVRHVRRMFHPGRGLGGPRARRSNMHFTSSSTGGLSSSQSSYSPSNREAMDPIAELLSQLSGVRRSAGGQLNSSGPSASQLQQLQMQLQLERQHAQAARQQLETARNATRRTNTSSVTTTITQSTATTNIANTESSQQTLQNSQFLLTRLNDPKMSETERQSMESERADRSLFVQELLLSTLVREESSSSDEDDRGEMADFGAMGCVDIMPLDVALENLNLKESNKGNEPPPPPL.

S2 bears the N-acetylserine mark. S2 bears the Phosphoserine mark. The segment at 4–60 (HEGVSCDACLKGNFRGRRYKCLICYDYDLCASCYESGATTTRHTTDHPMQCILTRVD) adopts a ZZ-type zinc-finger fold. 8 residues coordinate Zn(2+): C9, C12, C24, C27, C33, C36, H46, and H50. The C2H2-type zinc finger occupies 78–101 (FTCPYCGKMGYTETSLQEHVTSEH). Residues 154–193 (MFHPGRGLGGPRARRSNMHFTSSSTGGLSSSQSSYSPSNR) form a disordered region. Phosphoserine occurs at positions 169, 189, and 212. Low complexity predominate over residues 175 to 191 (SSSTGGLSSSQSSYSPS). Positions 225–257 (SQLQQLQMQLQLERQHAQAARQQLETARNATRR) form a coiled coil. The disordered stretch occupies residues 294 to 314 (TRLNDPKMSETERQSMESERA). Residues 297-314 (NDPKMSETERQSMESERA) show a composition bias toward basic and acidic residues. Residues S335 and S336 each carry the phosphoserine modification.

It belongs to the KCMF1 family. As to quaternary structure, component of the SIFI complex, composed of KCMF1, UBR4 and calmodulin (CALM1, CALM2 or CALM3). In terms of tissue distribution, spleen, small intestine, ovary, peripheral blood, lung, kidney and pancreas. Expressed at low levels in the thymus, prostate, testis, colon, heart, brain, placenta and liver.

It is found in the cytoplasm. The protein localises to the late endosome. Its subcellular location is the lysosome. It carries out the reaction S-ubiquitinyl-[E2 ubiquitin-conjugating enzyme]-L-cysteine + [acceptor protein]-L-lysine = [E2 ubiquitin-conjugating enzyme]-L-cysteine + N(6)-ubiquitinyl-[acceptor protein]-L-lysine.. It participates in protein modification; protein ubiquitination. Functionally, E3 ubiquitin-protein ligase which accepts ubiquitin from an E2 ubiquitin-conjugating enzyme and then transfers it to targeted substrates, promoting their degradation by the proteasome. Together with UBR4, component of the N-end rule pathway: ubiquitinates proteins bearing specific N-terminal residues that are destabilizing according to the N-end rule, leading to their degradation. Does not ubiquitinate proteins that are acetylated at the N-terminus. Together with UBR4, part of a protein quality control pathway that catalyzes ubiquitination and degradation of proteins that have been oxidized in response to reactive oxygen species (ROS): recognizes proteins with an Arg-CysO3(H) degron at the N-terminus, and mediates assembly of heterotypic 'Lys-63'-/'Lys-27'-linked branched ubiquitin chains on oxidized proteins, leading to their degradation by autophagy. Catalytic component of the SIFI complex, a multiprotein complex required to inhibit the mitochondrial stress response after a specific stress event has been resolved: ubiquitinates and degrades (1) components of the HRI-mediated signaling of the integrated stress response, such as DELE1 and EIF2AK1/HRI, as well as (2) unimported mitochondrial precursors. Within the SIFI complex, UBR4 initiates ubiquitin chain that are further elongated or branched by KCMF1. In Homo sapiens (Human), this protein is E3 ubiquitin-protein ligase KCMF1.